The primary structure comprises 85 residues: Large ribosomal subunit protein bL27 (85 aa).

The disordered stretch occupies residues 1–22 (MAHKKGGGSSRNGRDSNAQRRG).

This sequence belongs to the bacterial ribosomal protein bL27 family.

The chain is Large ribosomal subunit protein bL27 from Sorangium cellulosum (strain So ce56) (Polyangium cellulosum (strain So ce56)).